We begin with the raw amino-acid sequence, 376 residues long: Flap endonuclease 1 (376 aa).

Residues 1–105 (MGIKGLSKLL…GELHKRKENA (105 aa)) form an N-domain region. Asp34 contributes to the Mg(2+) binding site. Residues Arg47 and Arg71 each contribute to the DNA site. Mg(2+) is bound by residues Asp87, Glu159, Glu161, Asp180, and Asp182. Residues 123–254 (QAKKLMKRTA…ITAFELIQQY (132 aa)) are I-domain. Glu159 contributes to the DNA binding site. 2 residues coordinate DNA: Gly232 and Asp234. Asp234 provides a ligand contact to Mg(2+). Residues 336–344 (AQGRLDSFF) are interaction with PCNA. Residues 354-376 (SEAASGVKRKKPTTKAKESRKKK) form a disordered region. A compositionally biased stretch (basic residues) spans 360-376 (VKRKKPTTKAKESRKKK).

This sequence belongs to the XPG/RAD2 endonuclease family. FEN1 subfamily. Interacts with PCNA. Three molecules of FEN1 bind to one PCNA trimer with each molecule binding to one PCNA monomer. PCNA stimulates the nuclease activity without altering cleavage specificity. Requires Mg(2+) as cofactor. In terms of processing, phosphorylated. Phosphorylation upon DNA damage induces relocalization to the nuclear plasma.

It is found in the nucleus. The protein localises to the nucleolus. The protein resides in the nucleoplasm. Its subcellular location is the mitochondrion. Functionally, structure-specific nuclease with 5'-flap endonuclease and 5'-3' exonuclease activities involved in DNA replication and repair. During DNA replication, cleaves the 5'-overhanging flap structure that is generated by displacement synthesis when DNA polymerase encounters the 5'-end of a downstream Okazaki fragment. It enters the flap from the 5'-end and then tracks to cleave the flap base, leaving a nick for ligation. Also involved in the long patch base excision repair (LP-BER) pathway, by cleaving within the apurinic/apyrimidinic (AP) site-terminated flap. Acts as a genome stabilization factor that prevents flaps from equilibrating into structures that lead to duplications and deletions. Also possesses 5'-3' exonuclease activity on nicked or gapped double-stranded DNA, and exhibits RNase H activity. Also involved in replication and repair of rDNA and in repairing mitochondrial DNA. In Entamoeba histolytica (strain ATCC 30459 / HM-1:IMSS / ABRM), this protein is Flap endonuclease 1.